A 1036-amino-acid polypeptide reads, in one-letter code: Isoleucine--tRNA ligase (1036 aa).

A 'HIGH' region motif is present at residues 46–56; it reads PFATGLPHYGH. Positions 589 to 593 match the 'KMSKS' region motif; the sequence is KMSKR. ATP is bound at residue Lys592.

This sequence belongs to the class-I aminoacyl-tRNA synthetase family. IleS type 2 subfamily. In terms of assembly, monomer. It depends on Zn(2+) as a cofactor.

The protein localises to the cytoplasm. The catalysed reaction is tRNA(Ile) + L-isoleucine + ATP = L-isoleucyl-tRNA(Ile) + AMP + diphosphate. In terms of biological role, catalyzes the attachment of isoleucine to tRNA(Ile). As IleRS can inadvertently accommodate and process structurally similar amino acids such as valine, to avoid such errors it has two additional distinct tRNA(Ile)-dependent editing activities. One activity is designated as 'pretransfer' editing and involves the hydrolysis of activated Val-AMP. The other activity is designated 'posttransfer' editing and involves deacylation of mischarged Val-tRNA(Ile). The sequence is that of Isoleucine--tRNA ligase from Chlamydia trachomatis serovar L2 (strain ATCC VR-902B / DSM 19102 / 434/Bu).